A 246-amino-acid chain; its full sequence is 1-(5-phosphoribosyl)-5-[(5-phosphoribosylamino)methylideneamino] imidazole-4-carboxamide isomerase (246 aa).

Aspartate 8 serves as the catalytic Proton acceptor. Aspartate 129 functions as the Proton donor in the catalytic mechanism.

It belongs to the HisA/HisF family.

Its subcellular location is the cytoplasm. The catalysed reaction is 1-(5-phospho-beta-D-ribosyl)-5-[(5-phospho-beta-D-ribosylamino)methylideneamino]imidazole-4-carboxamide = 5-[(5-phospho-1-deoxy-D-ribulos-1-ylimino)methylamino]-1-(5-phospho-beta-D-ribosyl)imidazole-4-carboxamide. It functions in the pathway amino-acid biosynthesis; L-histidine biosynthesis; L-histidine from 5-phospho-alpha-D-ribose 1-diphosphate: step 4/9. The chain is 1-(5-phosphoribosyl)-5-[(5-phosphoribosylamino)methylideneamino] imidazole-4-carboxamide isomerase from Desulforamulus reducens (strain ATCC BAA-1160 / DSM 100696 / MI-1) (Desulfotomaculum reducens).